A 31-amino-acid polypeptide reads, in one-letter code: MPTITSYFGFLLAALTITSVLFIGLSKIRLI.

A helical transmembrane segment spans residues 4–24 (ITSYFGFLLAALTITSVLFIG).

This sequence belongs to the PetL family. The 4 large subunits of the cytochrome b6-f complex are cytochrome b6, subunit IV (17 kDa polypeptide, PetD), cytochrome f and the Rieske protein, while the 4 small subunits are PetG, PetL, PetM and PetN. The complex functions as a dimer.

The protein localises to the plastid. The protein resides in the chloroplast thylakoid membrane. Its function is as follows. Component of the cytochrome b6-f complex, which mediates electron transfer between photosystem II (PSII) and photosystem I (PSI), cyclic electron flow around PSI, and state transitions. PetL is important for photoautotrophic growth as well as for electron transfer efficiency and stability of the cytochrome b6-f complex. The polypeptide is Cytochrome b6-f complex subunit 6 (Lepidium virginicum (Virginia pepperweed)).